We begin with the raw amino-acid sequence, 226 residues long: Transcription repressor OFP12 (226 aa).

Residues 68–87 (SSTFTASTSTAANSSSSSAS) are compositionally biased toward low complexity. Residues 68–104 (SSTFTASTSTAANSSSSSASYDDSDNYGFAPDDDSPP) form a disordered region. The 66-residue stretch at 152-217 (VKHYVQSPDP…IRAFADILVS (66 aa)) folds into the OVATE domain.

As to quaternary structure, interacts with KNAT1, KNAT2, KNAT3 and KNAT4. In terms of tissue distribution, expressed in roots, shoots, stems, flower buds and siliques.

It localises to the nucleus. Transcriptional repressor that regulates multiple aspects of plant growth and development through the regulation of BEL1-LIKE (BLH) and KNOX TALE (KNAT) homeodomain transcription factors. The polypeptide is Transcription repressor OFP12 (OFP12) (Arabidopsis thaliana (Mouse-ear cress)).